The primary structure comprises 539 residues: Chaperonin GroEL (539 aa).

Residues 29-32 (TIGP), 86-90 (DGTTT), Gly413, 476-478 (NAA), and Asp492 each bind ATP.

The protein belongs to the chaperonin (HSP60) family. As to quaternary structure, forms a cylinder of 14 subunits composed of two heptameric rings stacked back-to-back. Interacts with the co-chaperonin GroES.

It is found in the cytoplasm. It carries out the reaction ATP + H2O + a folded polypeptide = ADP + phosphate + an unfolded polypeptide.. Its function is as follows. Together with its co-chaperonin GroES, plays an essential role in assisting protein folding. The GroEL-GroES system forms a nano-cage that allows encapsulation of the non-native substrate proteins and provides a physical environment optimized to promote and accelerate protein folding. The chain is Chaperonin GroEL from Staphylococcus epidermidis (strain ATCC 12228 / FDA PCI 1200).